Here is a 314-residue protein sequence, read N- to C-terminus: Acetaldehyde dehydrogenase 2 (314 aa).

Residue S15 to I18 participates in NAD(+) binding. C133 acts as the Acyl-thioester intermediate in catalysis. Residues S164 to N172 and N291 each bind NAD(+).

Belongs to the acetaldehyde dehydrogenase family.

It carries out the reaction acetaldehyde + NAD(+) + CoA = acetyl-CoA + NADH + H(+). The chain is Acetaldehyde dehydrogenase 2 from Pseudomonas putida (strain ATCC 700007 / DSM 6899 / JCM 31910 / BCRC 17059 / LMG 24140 / F1).